Consider the following 152-residue polypeptide: Large ribosomal subunit protein uL30 (152 aa).

The protein belongs to the universal ribosomal protein uL30 family. As to quaternary structure, part of the 50S ribosomal subunit.

The chain is Large ribosomal subunit protein uL30 from Archaeoglobus fulgidus (strain ATCC 49558 / DSM 4304 / JCM 9628 / NBRC 100126 / VC-16).